We begin with the raw amino-acid sequence, 463 residues long: 3-isopropylmalate dehydratase large subunit (463 aa).

The [4Fe-4S] cluster site is built by Cys347, Cys407, and Cys410.

This sequence belongs to the aconitase/IPM isomerase family. LeuC type 1 subfamily. Heterodimer of LeuC and LeuD. It depends on [4Fe-4S] cluster as a cofactor.

The catalysed reaction is (2R,3S)-3-isopropylmalate = (2S)-2-isopropylmalate. Its pathway is amino-acid biosynthesis; L-leucine biosynthesis; L-leucine from 3-methyl-2-oxobutanoate: step 2/4. In terms of biological role, catalyzes the isomerization between 2-isopropylmalate and 3-isopropylmalate, via the formation of 2-isopropylmaleate. The chain is 3-isopropylmalate dehydratase large subunit from Buchnera aphidicola subsp. Cinara cedri (strain Cc).